Consider the following 620-residue polypeptide: Bicaudal D-related protein homolog (620 aa).

Residues 23–41 are compositionally biased toward low complexity; the sequence is NNNNNSIVGGSSSSSSGGN. Positions 23 to 53 are disordered; sequence NNNNNSIVGGSSSSSSGGNKSKRPRQFGQYS. Coiled coils occupy residues 120–331 and 461–575; these read AAEL…LSER and VLEQ…LIDE. Composition is skewed to basic and acidic residues over residues 493-503 and 509-528; these read KEERDQARGDL and RDEL…DRRT. The interval 493 to 528 is disordered; sequence KEERDQARGDLEDNTDRDELLSKAQTERDAANDRRT.

The protein belongs to the BICDR family. May homodimerize but does not interact with BicD. May interact with eEF1gamma; The interaction is probably indirect.

In terms of biological role, functions redundantly with BicD. Involved in formation and/or development of mechanosensory organs during metamorphosis. During macrochaetae development, together with BicD, involved in Rab 6 and Spn-F stability and distribution and actin cytoskeleton organization. The chain is Bicaudal D-related protein homolog from Drosophila melanogaster (Fruit fly).